The sequence spans 268 residues: 14-3-3-like protein GF14 iota (268 aa).

2 positions are modified to phosphoserine: serine 70 and serine 193. Phosphothreonine is present on threonine 214. The segment at 240–268 (DLPEDGGEDNIKTEESKQEQAKPADATEN) is disordered. A compositionally biased stretch (basic and acidic residues) spans 248 to 261 (DNIKTEESKQEQAK).

It belongs to the 14-3-3 family. Expressed in flowers.

It localises to the nucleus. Its subcellular location is the cytoplasm. Functionally, is associated with a DNA binding complex that binds to the G box, a well-characterized cis-acting DNA regulatory element found in plant genes. The polypeptide is 14-3-3-like protein GF14 iota (Arabidopsis thaliana (Mouse-ear cress)).